The sequence spans 307 residues: Transmembrane and coiled-coil domain-containing protein 5B (307 aa).

The stretch at 17–207 (FASSLEAVKQ…LEKQISKAQD (191 aa)) forms a coiled coil. The helical transmembrane segment at 243-265 (YFQYLTFMVLVFIRLLAYVIFHL) threads the bilayer.

It belongs to the TMCO5 family.

It is found in the membrane. The sequence is that of Transmembrane and coiled-coil domain-containing protein 5B (TMCO5B) from Homo sapiens (Human).